Here is a 130-residue protein sequence, read N- to C-terminus: Small ribosomal subunit protein uS11 (130 aa).

Belongs to the universal ribosomal protein uS11 family. As to quaternary structure, part of the 30S ribosomal subunit. Interacts with proteins S7 and S18. Binds to IF-3.

Its function is as follows. Located on the platform of the 30S subunit, it bridges several disparate RNA helices of the 16S rRNA. Forms part of the Shine-Dalgarno cleft in the 70S ribosome. The sequence is that of Small ribosomal subunit protein uS11 from Xylella fastidiosa (strain M23).